Reading from the N-terminus, the 180-residue chain is Large ribosomal subunit protein uL5 (180 aa).

This sequence belongs to the universal ribosomal protein uL5 family. In terms of assembly, part of the 50S ribosomal subunit; part of the 5S rRNA/L5/L18/L25 subcomplex. Contacts the 5S rRNA and the P site tRNA. Forms a bridge to the 30S subunit in the 70S ribosome.

Its function is as follows. This is one of the proteins that bind and probably mediate the attachment of the 5S RNA into the large ribosomal subunit, where it forms part of the central protuberance. In the 70S ribosome it contacts protein S13 of the 30S subunit (bridge B1b), connecting the 2 subunits; this bridge is implicated in subunit movement. Contacts the P site tRNA; the 5S rRNA and some of its associated proteins might help stabilize positioning of ribosome-bound tRNAs. The polypeptide is Large ribosomal subunit protein uL5 (Synechococcus sp. (strain JA-2-3B'a(2-13)) (Cyanobacteria bacterium Yellowstone B-Prime)).